The sequence spans 192 residues: Ion-translocating oxidoreductase complex subunit A (192 aa).

6 helical membrane-spanning segments follow: residues 5-25 (LLLL…FLGL), 39-59 (IGMS…SYLV), 65-85 (LPFD…AVVV), 102-122 (ALGI…VALL), 134-154 (AIYG…FSAM), and 171-191 (AIAM…TGLV).

The protein belongs to the NqrDE/RnfAE family. In terms of assembly, the complex is composed of six subunits: RnfA, RnfB, RnfC, RnfD, RnfE and RnfG.

The protein resides in the cell inner membrane. In terms of biological role, part of a membrane-bound complex that couples electron transfer with translocation of ions across the membrane. This Shewanella baltica (strain OS185) protein is Ion-translocating oxidoreductase complex subunit A.